The chain runs to 470 residues: Glutamate--tRNA ligase (470 aa).

A 'HIGH' region motif is present at residues 9–19 (PSPTGFLHVGG). Positions 236 to 240 (RLSKR) match the 'KMSKS' region motif. Lysine 239 lines the ATP pocket.

The protein belongs to the class-I aminoacyl-tRNA synthetase family. Glutamate--tRNA ligase type 1 subfamily. As to quaternary structure, monomer.

The protein resides in the cytoplasm. It catalyses the reaction tRNA(Glu) + L-glutamate + ATP = L-glutamyl-tRNA(Glu) + AMP + diphosphate. In terms of biological role, catalyzes the attachment of glutamate to tRNA(Glu) in a two-step reaction: glutamate is first activated by ATP to form Glu-AMP and then transferred to the acceptor end of tRNA(Glu). The polypeptide is Glutamate--tRNA ligase (Legionella pneumophila (strain Paris)).